The chain runs to 127 residues: Small ribosomal subunit protein eS8 (127 aa).

The protein belongs to the eukaryotic ribosomal protein eS8 family. As to quaternary structure, part of the 30S ribosomal subunit.

The chain is Small ribosomal subunit protein eS8 (rps8e) from Pyrococcus abyssi (strain GE5 / Orsay).